Consider the following 315-residue polypeptide: Gamma-hemolysin component C (315 aa).

The N-terminal stretch at 1-29 is a signal peptide; it reads MLKNKILTTTLSVSLLAPLANPLLENAKA.

This sequence belongs to the aerolysin family. As to quaternary structure, toxicity requires sequential binding and synergistic association of a class S and a class F component which form heterooligomeric complexes. HlgC (class S) associates with HlgB (class F) thus forming an CB toxin.

Its function is as follows. Toxin that seems to act by forming pores in the membrane of the cell. Has a hemolytic and a leucotoxic activity. This Staphylococcus aureus (strain COL) protein is Gamma-hemolysin component C (hlgC).